The following is a 168-amino-acid chain: uncharacterized protein (168 aa).

The span at 1 to 15 (MKEASDREEAPKMVE) shows a compositional bias: basic and acidic residues. The segment at 1–36 (MKEASDREEAPKMVEKNYSTGFRKAHGEKDQSVTKP) is disordered.

It is found in the cytoplasm. This is an uncharacterized protein from Saccharomyces cerevisiae (strain ATCC 204508 / S288c) (Baker's yeast).